Here is a 257-residue protein sequence, read N- to C-terminus: Na(+)-translocating NADH-quinone reductase subunit C (257 aa).

Residues 12–32 (LFVVIALSLVCSIIVSAAAVG) traverse the membrane as a helical segment. Position 225 is an FMN phosphoryl threonine (Thr-225).

This sequence belongs to the NqrC family. Composed of six subunits; NqrA, NqrB, NqrC, NqrD, NqrE and NqrF. FMN serves as cofactor.

It localises to the cell inner membrane. It carries out the reaction a ubiquinone + n Na(+)(in) + NADH + H(+) = a ubiquinol + n Na(+)(out) + NAD(+). Functionally, NQR complex catalyzes the reduction of ubiquinone-1 to ubiquinol by two successive reactions, coupled with the transport of Na(+) ions from the cytoplasm to the periplasm. NqrA to NqrE are probably involved in the second step, the conversion of ubisemiquinone to ubiquinol. This is Na(+)-translocating NADH-quinone reductase subunit C from Vibrio cholerae serotype O1 (strain ATCC 39541 / Classical Ogawa 395 / O395).